Reading from the N-terminus, the 90-residue chain is Mitochondrial import inner membrane translocase subunit Tim9 (90 aa).

Residues 24–48 (CFNSCVNEFGSRTVSGKEESCANNC) carry the Twin CX3C motif motif. Intrachain disulfides connect C24/C48 and C28/C44.

The protein belongs to the small Tim family. Heterohexamer; composed of 3 copies of tim-9/tin-9.1 and 3 copies of tim-10/tin-10, named soluble 70 kDa complex. The complex associates with the tim-22 component of the TIM22 complex. Interacts with multi-pass transmembrane proteins in transit.

The protein localises to the mitochondrion inner membrane. Its function is as follows. Mitochondrial intermembrane chaperone that participates in the import and insertion of multi-pass transmembrane proteins into the mitochondrial inner membrane. May also be required for the transfer of beta-barrel precursors from the TOM complex to the sorting and assembly machinery (SAM complex) of the outer membrane. Acts as a chaperone-like protein that protects the hydrophobic precursors from aggregation and guide them through the mitochondrial intermembrane space. This is Mitochondrial import inner membrane translocase subunit Tim9 (tin-9.1) from Caenorhabditis elegans.